Consider the following 339-residue polypeptide: Serine/threonine-protein kinase pdik1l-B (339 aa).

Residues 8-332 form the Protein kinase domain; that stretch reads YDLIREVGRG…LELKLIQIAF (325 aa). Residues 14–22 and Lys-37 contribute to the ATP site; that span reads VGRGSYGLV. The active-site Proton acceptor is Asp-164.

This sequence belongs to the protein kinase superfamily. Ser/Thr protein kinase family.

Its subcellular location is the nucleus. The catalysed reaction is L-seryl-[protein] + ATP = O-phospho-L-seryl-[protein] + ADP + H(+). It catalyses the reaction L-threonyl-[protein] + ATP = O-phospho-L-threonyl-[protein] + ADP + H(+). This is Serine/threonine-protein kinase pdik1l-B (pdik1-b) from Xenopus laevis (African clawed frog).